The primary structure comprises 382 residues: MIKSALLVLEDGTQFHGRAIGATGSAVGEVVFNTSMTGYQEILTDPSYSRQIVTLTYPHIGNVGTNDADEESSQVHAQGLVIRDLPLIASNFRNTEDLSSYLKRHNIVAIADIDTRKLTRLLREKGAQNGCIIAGDNPDAALALEKARAFPGLNGMDLAKEVTTAEAYSWTQGSWTLTGGLPEAKKEDELPFHVVAYDFGAKRNILRMLVDRGCRLTIVPAQTSAEDVLKMNPDGIFLSNGPGDPAPCDYAITAIQKFLETDIPVFGICLGHQLLALASGAKTVKMKFGHHGGNHPVKDVEKNVVMITAQNHGFAVDEATLPANLRVTHKSLFDGTLQGIHRTDKPAFSFQGHPEASPGPHDAAPLFDHFIELIEQYRKTAK.

Residues 1–189 (MIKSALLVLE…GLPEAKKEDE (189 aa)) are CPSase. L-glutamine contacts are provided by serine 47, glycine 241, and glycine 243. The 188-residue stretch at 193–380 (HVVAYDFGAK…IELIEQYRKT (188 aa)) folds into the Glutamine amidotransferase type-1 domain. Cysteine 269 functions as the Nucleophile in the catalytic mechanism. L-glutamine contacts are provided by leucine 270, glutamine 273, asparagine 311, glycine 313, and phenylalanine 314. Catalysis depends on residues histidine 353 and glutamate 355.

The protein belongs to the CarA family. Composed of two chains; the small (or glutamine) chain promotes the hydrolysis of glutamine to ammonia, which is used by the large (or ammonia) chain to synthesize carbamoyl phosphate. Tetramer of heterodimers (alpha,beta)4.

It carries out the reaction hydrogencarbonate + L-glutamine + 2 ATP + H2O = carbamoyl phosphate + L-glutamate + 2 ADP + phosphate + 2 H(+). It catalyses the reaction L-glutamine + H2O = L-glutamate + NH4(+). The protein operates within amino-acid biosynthesis; L-arginine biosynthesis; carbamoyl phosphate from bicarbonate: step 1/1. Its pathway is pyrimidine metabolism; UMP biosynthesis via de novo pathway; (S)-dihydroorotate from bicarbonate: step 1/3. Its function is as follows. Small subunit of the glutamine-dependent carbamoyl phosphate synthetase (CPSase). CPSase catalyzes the formation of carbamoyl phosphate from the ammonia moiety of glutamine, carbonate, and phosphate donated by ATP, constituting the first step of 2 biosynthetic pathways, one leading to arginine and/or urea and the other to pyrimidine nucleotides. The small subunit (glutamine amidotransferase) binds and cleaves glutamine to supply the large subunit with the substrate ammonia. This Escherichia coli O157:H7 protein is Carbamoyl phosphate synthase small chain.